We begin with the raw amino-acid sequence, 119 residues long: Large ribosomal subunit protein uL22c (119 aa).

It belongs to the universal ribosomal protein uL22 family. In terms of assembly, part of the 50S ribosomal subunit.

It localises to the plastid. It is found in the chloroplast. This protein binds specifically to 23S rRNA. In terms of biological role, the globular domain of the protein is located near the polypeptide exit tunnel on the outside of the subunit, while an extended beta-hairpin is found that lines the wall of the exit tunnel in the center of the 70S ribosome. The chain is Large ribosomal subunit protein uL22c (rpl22) from Chaetosphaeridium globosum (Charophycean green alga).